The primary structure comprises 364 residues: Tubulin alpha-2 chain (364 aa).

Residues Gly-59, Thr-60, Thr-94, Asn-121, and Asn-144 each contribute to the GTP site. Glu-170 is a catalytic residue.

Belongs to the tubulin family. In terms of assembly, dimer of alpha and beta chains. A typical microtubule is a hollow water-filled tube with an outer diameter of 25 nm and an inner diameter of 15 nM. Alpha-beta heterodimers associate head-to-tail to form protofilaments running lengthwise along the microtubule wall with the beta-tubulin subunit facing the microtubule plus end conferring a structural polarity. Microtubules usually have 13 protofilaments but different protofilament numbers can be found in some organisms and specialized cells. The cofactor is Mg(2+). In terms of processing, undergoes a tyrosination/detyrosination cycle, the cyclic removal and re-addition of a C-terminal tyrosine residue by the enzymes tubulin tyrosine carboxypeptidase (TTCP) and tubulin tyrosine ligase (TTL), respectively.

It localises to the cytoplasm. The protein localises to the cytoskeleton. The enzyme catalyses GTP + H2O = GDP + phosphate + H(+). Functionally, tubulin is the major constituent of microtubules, a cylinder consisting of laterally associated linear protofilaments composed of alpha- and beta-tubulin heterodimers. Microtubules grow by the addition of GTP-tubulin dimers to the microtubule end, where a stabilizing cap forms. Below the cap, tubulin dimers are in GDP-bound state, owing to GTPase activity of alpha-tubulin. This chain is Tubulin alpha-2 chain (TUBA2), found in Anemia phyllitidis (Fern).